A 381-amino-acid polypeptide reads, in one-letter code: Heme A synthase (381 aa).

Residues 1–28 are disordered; the sequence is MSNRTIFEEVSSDSKQQSSPTPGGIDRK. Helical transmembrane passes span 36–56, 125–145, 151–171, 187–207, 230–250, 287–307, 320–340, and 344–364; these read IRVWLAVLFALVVAMIAVGGL, VIGLIWALGFFGFLVTRSIPT, LLLPGILGGVQGAIGWWMVAS, LATHLGLAFVILGFLAWYMFL, STGLLHFAFLQILLGALVAGI, LVQFIHRVAGYLLFAFAVVVW, FAFNAVFAALSLQLVIGIVTV, and APVEIAIVHQAVAVLVWVLIL. Position 292 (H292) interacts with heme. H352 serves as a coordination point for heme.

This sequence belongs to the COX15/CtaA family. Type 2 subfamily. In terms of assembly, interacts with CtaB. The cofactor is heme b.

It localises to the cell membrane. The enzyme catalyses Fe(II)-heme o + 2 A + H2O = Fe(II)-heme a + 2 AH2. It functions in the pathway porphyrin-containing compound metabolism; heme A biosynthesis; heme A from heme O: step 1/1. Functionally, catalyzes the conversion of heme O to heme A by two successive hydroxylations of the methyl group at C8. The first hydroxylation forms heme I, the second hydroxylation results in an unstable dihydroxymethyl group, which spontaneously dehydrates, resulting in the formyl group of heme A. This chain is Heme A synthase, found in Ruegeria sp. (strain TM1040) (Silicibacter sp.).